We begin with the raw amino-acid sequence, 143 residues long: MTTEKGEQLRQQLIAAVVKKRAAIARAHEIVVRLLEPGIPEPEFLSLLCEIGPPNYSDIVDEREINKLCGYPLCSTVLENVPKQKYSISASKNKVYDITERKKFCSGYCFKASEYIKSQVPTSPLWLRDRETRPSFQLLPRNT.

The RTR1-type zinc-finger motif lies at 46–129 (SLLCEIGPPN…VPTSPLWLRD (84 aa)). Zn(2+) contacts are provided by C69, C74, C105, and C109.

Belongs to the RPAP2 family.

It is found in the nucleus. The catalysed reaction is O-phospho-L-seryl-[protein] + H2O = L-seryl-[protein] + phosphate. It carries out the reaction O-phospho-L-threonyl-[protein] + H2O = L-threonyl-[protein] + phosphate. Its function is as follows. Putative RNA polymerase II subunit B1 C-terminal domain (CTD) phosphatase involved in RNA polymerase II transcription regulation. The chain is Putative RNA polymerase II subunit B1 CTD phosphatase RPAP2 homolog from Drosophila melanogaster (Fruit fly).